We begin with the raw amino-acid sequence, 144 residues long: Large ribosomal subunit protein uL13 (144 aa).

Belongs to the universal ribosomal protein uL13 family. In terms of assembly, part of the 50S ribosomal subunit.

Its function is as follows. This protein is one of the early assembly proteins of the 50S ribosomal subunit, although it is not seen to bind rRNA by itself. It is important during the early stages of 50S assembly. This Nitrosomonas eutropha (strain DSM 101675 / C91 / Nm57) protein is Large ribosomal subunit protein uL13.